The chain runs to 742 residues: 5-methyltetrahydropteroyltriglutamate--homocysteine methyltransferase (742 aa).

5-methyltetrahydropteroyltri-L-glutamate contacts are provided by residues R18–K21 and K112. L-homocysteine-binding positions include I420–S422 and E473. Residues I420 to S422 and E473 each bind L-methionine. W550 lines the 5-methyltetrahydropteroyltri-L-glutamate pocket. D588 serves as a coordination point for L-homocysteine. L-methionine is bound at residue D588. Residue E594 coordinates 5-methyltetrahydropteroyltri-L-glutamate. Residues H630, C632, and E654 each contribute to the Zn(2+) site. The active-site Proton donor is the H683. C715 contacts Zn(2+).

It belongs to the vitamin-B12 independent methionine synthase family. It depends on Zn(2+) as a cofactor.

It carries out the reaction 5-methyltetrahydropteroyltri-L-glutamate + L-homocysteine = tetrahydropteroyltri-L-glutamate + L-methionine. It participates in amino-acid biosynthesis; L-methionine biosynthesis via de novo pathway; L-methionine from L-homocysteine (MetE route): step 1/1. Functionally, catalyzes the transfer of a methyl group from 5-methyltetrahydrofolate to homocysteine resulting in methionine formation. The chain is 5-methyltetrahydropteroyltriglutamate--homocysteine methyltransferase from Staphylococcus aureus (strain MRSA252).